Consider the following 951-residue polypeptide: 2-oxoglutarate dehydrogenase E1 component (951 aa).

The segment at 906–925 is disordered; sequence RRRRSSPAEGNPTAHKQEQA.

It belongs to the alpha-ketoglutarate dehydrogenase family. In terms of assembly, homodimer. Part of the 2-oxoglutarate dehydrogenase (OGDH) complex composed of E1 (2-oxoglutarate dehydrogenase), E2 (dihydrolipoamide succinyltransferase) and E3 (dihydrolipoamide dehydrogenase); the complex contains multiple copies of the three enzymatic components (E1, E2 and E3). It depends on thiamine diphosphate as a cofactor.

It carries out the reaction N(6)-[(R)-lipoyl]-L-lysyl-[protein] + 2-oxoglutarate + H(+) = N(6)-[(R)-S(8)-succinyldihydrolipoyl]-L-lysyl-[protein] + CO2. E1 component of the 2-oxoglutarate dehydrogenase (OGDH) complex which catalyzes the decarboxylation of 2-oxoglutarate, the first step in the conversion of 2-oxoglutarate to succinyl-CoA and CO(2). This Exiguobacterium sp. (strain ATCC BAA-1283 / AT1b) protein is 2-oxoglutarate dehydrogenase E1 component.